Consider the following 283-residue polypeptide: Formamidopyrimidine-DNA glycosylase (283 aa).

The active-site Schiff-base intermediate with DNA is the P2. E3 (proton donor) is an active-site residue. The Proton donor; for beta-elimination activity role is filled by K61. DNA-binding residues include H94, R113, and K159. An FPG-type zinc finger spans residues 245 to 279; sequence DAYGREGESCRRCGAVMRREKFMNRSSFYCPKCQP. The Proton donor; for delta-elimination activity role is filled by R269.

The protein belongs to the FPG family. Monomer. The cofactor is Zn(2+).

It carries out the reaction Hydrolysis of DNA containing ring-opened 7-methylguanine residues, releasing 2,6-diamino-4-hydroxy-5-(N-methyl)formamidopyrimidine.. The enzyme catalyses 2'-deoxyribonucleotide-(2'-deoxyribose 5'-phosphate)-2'-deoxyribonucleotide-DNA = a 3'-end 2'-deoxyribonucleotide-(2,3-dehydro-2,3-deoxyribose 5'-phosphate)-DNA + a 5'-end 5'-phospho-2'-deoxyribonucleoside-DNA + H(+). Involved in base excision repair of DNA damaged by oxidation or by mutagenic agents. Acts as a DNA glycosylase that recognizes and removes damaged bases. Has a preference for oxidized purines, such as 7,8-dihydro-8-oxoguanine (8-oxoG). Has AP (apurinic/apyrimidinic) lyase activity and introduces nicks in the DNA strand. Cleaves the DNA backbone by beta-delta elimination to generate a single-strand break at the site of the removed base with both 3'- and 5'-phosphates. This is Formamidopyrimidine-DNA glycosylase from Mycolicibacterium paratuberculosis (strain ATCC BAA-968 / K-10) (Mycobacterium paratuberculosis).